The chain runs to 461 residues: Cyclin-A2-4 (461 aa).

This sequence belongs to the cyclin family. Cyclin AB subfamily.

The chain is Cyclin-A2-4 (CYCA2-4) from Arabidopsis thaliana (Mouse-ear cress).